The following is a 250-amino-acid chain: Kv channel-interacting protein 4 (250 aa).

The interval 2–44 (NVRRVESISAQLEEASSTGGFLYAQNSTKRSIKERLMKLLPCS) is KIS. Phosphoserine occurs at positions 17 and 56. The EF-hand 1; degenerate domain occupies 61–117 (LEMATVRHRPEALELLEAQSKFTKKELQILYRGFKNECPSGVVNEETFKEIYSQFFP). EF-hand domains are found at residues 120-155 (DSTT…LLRG), 156-191 (TVQE…IYDM), and 204-239 (APRQ…DENI). Aspartate 133, aspartate 135, asparagine 137, aspartate 144, aspartate 169, asparagine 171, aspartate 173, tyrosine 175, glutamate 180, aspartate 217, asparagine 219, aspartate 221, and glutamate 228 together coordinate Ca(2+). The segment at 237 to 250 (ENIMRSMQLFENVI) is interaction with KCND2.

This sequence belongs to the recoverin family. Component of heteromultimeric potassium channels. Identified in potassium channel complexes containing KCND1, KCND2, KCND3, KCNIP1, KCNIP2, KCNIP3, KCNIP4, DPP6 and DPP10. Interacts with KCND2. Interacts with KCND3. Interacts with the C-terminus of PSEN2 and probably PSEN1.

The protein localises to the cell membrane. It localises to the cytoplasm. Its subcellular location is the peroxisome. In terms of biological role, regulatory subunit of Kv4/D (Shal)-type voltage-gated rapidly inactivating A-type potassium channels. Modulates KCND2 channel density, inactivation kinetics and rate of recovery from inactivation in a calcium-dependent and isoform-specific manner. Modulates KCND3/Kv4.3 currents. Isoform 4 does not increase KCND2 expression at the cell membrane. Isoform 4 retains KCND3 in the endoplasmic reticulum and negatively regulates its expression at the cell membrane. The chain is Kv channel-interacting protein 4 (KCNIP4) from Macaca fascicularis (Crab-eating macaque).